A 100-amino-acid chain; its full sequence is uncharacterized protein (100 aa).

Residues 65–96 (PELSKNWEKLKKEIEQKHKEIQELISEFDNMF) are a coiled coil.

This is an uncharacterized protein from Acidianus filamentous virus 2 (isolate Italy/Pozzuoli) (AFV-2).